Here is a 142-residue protein sequence, read N- to C-terminus: UPF0102 protein PsycPRwf_0497 (142 aa).

Belongs to the UPF0102 family.

This Psychrobacter sp. (strain PRwf-1) protein is UPF0102 protein PsycPRwf_0497.